Reading from the N-terminus, the 261-residue chain is RING-H2 finger protein ATL58 (261 aa).

The helical transmembrane segment at 25 to 45 (AFIFSVPICFTFIILFLFYLI) threads the bilayer. Residues 100–142 (CSVCLGDYQPNDKLQQIPVCKHTFHMDCIDLWLTSHTTCPLCR) form an RING-type; atypical zinc finger. Disordered stretches follow at residues 149–227 (RSRQ…NDGH) and 241–261 (MEED…CRTG). Residues 194–221 (SGVSSQPESQPVVNHRGVSSQPESQPVN) are compositionally biased toward polar residues.

The protein belongs to the RING-type zinc finger family. ATL subfamily.

It is found in the membrane. It catalyses the reaction S-ubiquitinyl-[E2 ubiquitin-conjugating enzyme]-L-cysteine + [acceptor protein]-L-lysine = [E2 ubiquitin-conjugating enzyme]-L-cysteine + N(6)-ubiquitinyl-[acceptor protein]-L-lysine.. It functions in the pathway protein modification; protein ubiquitination. The chain is RING-H2 finger protein ATL58 (ATL58) from Arabidopsis thaliana (Mouse-ear cress).